The primary structure comprises 426 residues: Tyrosine--tRNA ligase (426 aa).

Tyr35 provides a ligand contact to L-tyrosine. The short motif at 40-49 (PTAPSLHIGH) is the 'HIGH' region element. The L-tyrosine site is built by Tyr174 and Gln178. Residues 234-238 (KFGKT) carry the 'KMSKS' region motif. ATP is bound at residue Lys237. An S4 RNA-binding domain is found at 358 to 418 (PRVVDALVAT…WAVIRRGRRA (61 aa)).

It belongs to the class-I aminoacyl-tRNA synthetase family. TyrS type 1 subfamily. In terms of assembly, homodimer.

Its subcellular location is the cytoplasm. It catalyses the reaction tRNA(Tyr) + L-tyrosine + ATP = L-tyrosyl-tRNA(Tyr) + AMP + diphosphate + H(+). Its function is as follows. Catalyzes the attachment of tyrosine to tRNA(Tyr) in a two-step reaction: tyrosine is first activated by ATP to form Tyr-AMP and then transferred to the acceptor end of tRNA(Tyr). The chain is Tyrosine--tRNA ligase from Acidothermus cellulolyticus (strain ATCC 43068 / DSM 8971 / 11B).